Consider the following 172-residue polypeptide: Large ribosomal subunit protein uL10 (172 aa).

It belongs to the universal ribosomal protein uL10 family. Part of the ribosomal stalk of the 50S ribosomal subunit. The N-terminus interacts with L11 and the large rRNA to form the base of the stalk. The C-terminus forms an elongated spine to which L12 dimers bind in a sequential fashion forming a multimeric L10(L12)X complex.

In terms of biological role, forms part of the ribosomal stalk, playing a central role in the interaction of the ribosome with GTP-bound translation factors. The protein is Large ribosomal subunit protein uL10 of Prosthecochloris aestuarii (strain DSM 271 / SK 413).